The primary structure comprises 205 residues: Holliday junction resolvase RecU (205 aa).

The segment at 1 to 22 (MAINYPAGTRRRTAQAKNTMRT) is disordered. Mg(2+)-binding residues include T90, D92, D105, and Q124.

It belongs to the RecU family. It depends on Mg(2+) as a cofactor.

The protein localises to the cytoplasm. It catalyses the reaction Endonucleolytic cleavage at a junction such as a reciprocal single-stranded crossover between two homologous DNA duplexes (Holliday junction).. In terms of biological role, endonuclease that resolves Holliday junction intermediates in genetic recombination. Cleaves mobile four-strand junctions by introducing symmetrical nicks in paired strands. Promotes annealing of linear ssDNA with homologous dsDNA. Required for DNA repair, homologous recombination and chromosome segregation. The polypeptide is Holliday junction resolvase RecU (Leuconostoc citreum (strain KM20)).